The primary structure comprises 111 residues: Cornifelin homolog (111 aa).

Belongs to the cornifelin family.

The sequence is that of Cornifelin homolog (cnfn) from Xenopus tropicalis (Western clawed frog).